Reading from the N-terminus, the 746-residue chain is Taurocyamine kinase (746 aa).

Approximate repeat units follow at residues 31–393 and 394–705; these read MQVE…PEGV and MPVE…YGEH. A Phosphagen kinase N-terminal 1 domain is found at 35 to 116; that stretch reads SLQNLQAKIR…FDAVIADYHK (82 aa). A Phosphagen kinase C-terminal 1 domain is found at 146-382; it reads LVVSTRVRLG…RALLELEVML (237 aa). ATP-binding positions include 149–153, histidine 212, and arginine 256; that span reads STRVR. Cysteine 298 is a catalytic residue. ATP is bound by residues 307–311 and 335–340; these read RASVH and RGTHGE. The region spanning 398-479 is the Phosphagen kinase N-terminal 2 domain; it reads PLTYLAKLLE…LDPLICDYHG (82 aa). Residues 509–746 form the Phosphagen kinase C-terminal 2 domain; that stretch reads FIVSTRVRVG…AKMIEIEKGL (238 aa). ATP-binding positions include 512 to 516, histidine 575, and arginine 619; that span reads STRVR. Cysteine 661 is an active-site residue. ATP is bound by residues 670–674 and 699–704; these read RASVL and RGLYGE.

It belongs to the ATP:guanido phosphotransferase family. It depends on Mg(2+) as a cofactor.

It catalyses the reaction taurocyamine + ATP = N-phosphotaurocyamine + ADP + H(+). Functionally, this family of enzymes reversibly catalyzes the transfer of phosphate between ATP and various phosphogens (e.g. creatine phosphate). In Schistosoma mansoni (Blood fluke), this protein is Taurocyamine kinase.